We begin with the raw amino-acid sequence, 153 residues long: Xanthine-guanine phosphoribosyltransferase (153 aa).

Residues 37–38 (RG) and 89–97 (DDLVDTGNT) contribute to the 5-phospho-alpha-D-ribose 1-diphosphate site. Asp-90 contributes to the Mg(2+) binding site. Guanine contacts are provided by Asp-93 and Ile-136. Residues Asp-93 and Ile-136 each contribute to the xanthine site. GMP-binding positions include 93 to 97 (DTGNT) and 135 to 136 (WI).

Belongs to the purine/pyrimidine phosphoribosyltransferase family. XGPT subfamily. As to quaternary structure, homotetramer. The cofactor is Mg(2+).

The protein localises to the cell inner membrane. The catalysed reaction is GMP + diphosphate = guanine + 5-phospho-alpha-D-ribose 1-diphosphate. It catalyses the reaction XMP + diphosphate = xanthine + 5-phospho-alpha-D-ribose 1-diphosphate. It carries out the reaction IMP + diphosphate = hypoxanthine + 5-phospho-alpha-D-ribose 1-diphosphate. It participates in purine metabolism; GMP biosynthesis via salvage pathway; GMP from guanine: step 1/1. The protein operates within purine metabolism; XMP biosynthesis via salvage pathway; XMP from xanthine: step 1/1. Its function is as follows. Purine salvage pathway enzyme that catalyzes the transfer of the ribosyl-5-phosphate group from 5-phospho-alpha-D-ribose 1-diphosphate (PRPP) to the N9 position of the 6-oxopurines guanine and xanthine to form the corresponding ribonucleotides GMP (guanosine 5'-monophosphate) and XMP (xanthosine 5'-monophosphate), with the release of PPi. To a lesser extent, also acts on hypoxanthine. This is Xanthine-guanine phosphoribosyltransferase from Pasteurella multocida (strain Pm70).